Here is a 738-residue protein sequence, read N- to C-terminus: Ribosomal RNA large subunit methyltransferase K/L (738 aa).

Residues 46–157 (TAYRVCLWSR…ADQAVIGLDL (112 aa)) enclose the THUMP domain.

This sequence belongs to the methyltransferase superfamily. RlmKL family.

It localises to the cytoplasm. The enzyme catalyses guanosine(2445) in 23S rRNA + S-adenosyl-L-methionine = N(2)-methylguanosine(2445) in 23S rRNA + S-adenosyl-L-homocysteine + H(+). The catalysed reaction is guanosine(2069) in 23S rRNA + S-adenosyl-L-methionine = N(2)-methylguanosine(2069) in 23S rRNA + S-adenosyl-L-homocysteine + H(+). Its function is as follows. Specifically methylates the guanine in position 2445 (m2G2445) and the guanine in position 2069 (m7G2069) of 23S rRNA. The polypeptide is Ribosomal RNA large subunit methyltransferase K/L (Methylococcus capsulatus (strain ATCC 33009 / NCIMB 11132 / Bath)).